The sequence spans 359 residues: Membrane-bound lytic murein transglycosylase C (359 aa).

Positions 1 to 16 (MKKYLALALIAPLLIS) are cleaved as a signal peptide. Cys17 carries N-palmitoyl cysteine lipidation. Residue Cys17 is the site of S-diacylglycerol cysteine attachment.

It belongs to the transglycosylase Slt family.

The protein localises to the cell outer membrane. The enzyme catalyses Exolytic cleavage of the (1-&gt;4)-beta-glycosidic linkage between N-acetylmuramic acid (MurNAc) and N-acetylglucosamine (GlcNAc) residues in peptidoglycan, from either the reducing or the non-reducing ends of the peptidoglycan chains, with concomitant formation of a 1,6-anhydrobond in the MurNAc residue.. Murein-degrading enzyme. May play a role in recycling of muropeptides during cell elongation and/or cell division. This is Membrane-bound lytic murein transglycosylase C from Shigella sonnei (strain Ss046).